The chain runs to 282 residues: 2-dehydro-3-deoxyphosphooctonate aldolase (282 aa).

The protein belongs to the KdsA family.

The protein resides in the cytoplasm. It catalyses the reaction D-arabinose 5-phosphate + phosphoenolpyruvate + H2O = 3-deoxy-alpha-D-manno-2-octulosonate-8-phosphate + phosphate. The protein operates within carbohydrate biosynthesis; 3-deoxy-D-manno-octulosonate biosynthesis; 3-deoxy-D-manno-octulosonate from D-ribulose 5-phosphate: step 2/3. Its pathway is bacterial outer membrane biogenesis; lipopolysaccharide biosynthesis. The sequence is that of 2-dehydro-3-deoxyphosphooctonate aldolase from Agrobacterium fabrum (strain C58 / ATCC 33970) (Agrobacterium tumefaciens (strain C58)).